Reading from the N-terminus, the 416-residue chain is Serine hydroxymethyltransferase (416 aa).

Residues Leu-121 and 125–127 (GHL) each bind (6S)-5,6,7,8-tetrahydrofolate. Lys-229 carries the post-translational modification N6-(pyridoxal phosphate)lysine.

It belongs to the SHMT family. As to quaternary structure, homodimer. Requires pyridoxal 5'-phosphate as cofactor.

It localises to the cytoplasm. It catalyses the reaction (6R)-5,10-methylene-5,6,7,8-tetrahydrofolate + glycine + H2O = (6S)-5,6,7,8-tetrahydrofolate + L-serine. The protein operates within one-carbon metabolism; tetrahydrofolate interconversion. It participates in amino-acid biosynthesis; glycine biosynthesis; glycine from L-serine: step 1/1. Its function is as follows. Catalyzes the reversible interconversion of serine and glycine with tetrahydrofolate (THF) serving as the one-carbon carrier. This reaction serves as the major source of one-carbon groups required for the biosynthesis of purines, thymidylate, methionine, and other important biomolecules. Also exhibits THF-independent aldolase activity toward beta-hydroxyamino acids, producing glycine and aldehydes, via a retro-aldol mechanism. The chain is Serine hydroxymethyltransferase from Neisseria gonorrhoeae (strain NCCP11945).